A 344-amino-acid polypeptide reads, in one-letter code: Membrane progestin receptor delta (344 aa).

The Cytoplasmic segment spans residues 1–51 (MLSLKLPQLLQVHQVPRVFWEDGIMSGYRRPTSSALDCVLSSFQMTNETVN). Residues 52–72 (IWTHFLPTWYFLWRLLALAGG) form a helical membrane-spanning segment. Topologically, residues 73 to 83 (PGFRAEPYHWP) are extracellular. A helical membrane pass occupies residues 84-104 (LLVFLLPACLYPFASCCAHTF). Topologically, residues 105–113 (SSMSPRMRH) are cytoplasmic. The helical transmembrane segment at 114-134 (ICYFLDYGALSLYSLGCAFPY) threads the bilayer. At 135-147 (AAYSMPASWLHGH) the chain is on the extracellular side. The chain crosses the membrane as a helical span at residues 148–168 (LHQFFVPAAALNSFLCTGLSC). The Cytoplasmic portion of the chain corresponds to 169-217 (YSRFLELESPGLSKVLRTGAFAYPFLFDNLPLFYRLGLCWGRGHGCGQE). The helical transmembrane segment at 218 to 238 (ALSTSHGYHLFCALLTGFLFA) threads the bilayer. Residues 239-258 (SHLPERLAPGRFDYIGHSHQ) are Extracellular-facing. The chain crosses the membrane as a helical span at residues 259-279 (LFHICAVLGTHFQLEAVLADM). Over 280–292 (GSRRAWLATQEPA) the chain is Cytoplasmic. A helical transmembrane segment spans residues 293 to 313 (LGLAGTVATLVLAAAGNLLII). Over 314-344 (AAFTATLLRAPSTCPLLQGGPLEGGTQAKQQ) the chain is Extracellular.

This sequence belongs to the ADIPOR family. Homodimer. As to expression, brain specific. Highly expressed in the hypothalamus, also expressed in forebrain, amygdala, corpus callosum and spinal cord.

It is found in the cell membrane. In terms of biological role, plasma membrane progesterone (P4) receptor coupled to G proteins. Seems to act through a G(s) mediated pathway. Involved in neurosteroid inhibition of apoptosis. May be involved in regulating rapid P4 signaling in the nervous system. Also binds dehydroepiandrosterone (DHEA), pregnanolone, pregnenolone and allopregnanolone. The sequence is that of Membrane progestin receptor delta from Homo sapiens (Human).